Consider the following 293-residue polypeptide: Probable 2-(5''-triphosphoribosyl)-3'-dephosphocoenzyme-A synthase (293 aa).

Belongs to the CitG/MdcB family.

It catalyses the reaction 3'-dephospho-CoA + ATP = 2'-(5''-triphospho-alpha-D-ribosyl)-3'-dephospho-CoA + adenine. Its function is as follows. Involved in the formation of 2-(5''-phosphoribosyl)-3'-dephosphocoenzyme-A, the prosthetic group of the acyl-carrier protein of the malonate decarboxylase. The protein is Probable 2-(5''-triphosphoribosyl)-3'-dephosphocoenzyme-A synthase of Pseudomonas aeruginosa (strain ATCC 15692 / DSM 22644 / CIP 104116 / JCM 14847 / LMG 12228 / 1C / PRS 101 / PAO1).